We begin with the raw amino-acid sequence, 437 residues long: Amino-acid acetyltransferase (437 aa).

Residues 289–429 (ENIRLATSFD…EHYNYQRMSK (141 aa)) form the N-acetyltransferase domain.

It belongs to the acetyltransferase family. ArgA subfamily.

It localises to the cytoplasm. The catalysed reaction is L-glutamate + acetyl-CoA = N-acetyl-L-glutamate + CoA + H(+). Its pathway is amino-acid biosynthesis; L-arginine biosynthesis; N(2)-acetyl-L-ornithine from L-glutamate: step 1/4. The sequence is that of Amino-acid acetyltransferase from Actinobacillus pleuropneumoniae serotype 7 (strain AP76).